Here is a 467-residue protein sequence, read N- to C-terminus: tRNA-2-methylthio-N(6)-dimethylallyladenosine synthase (467 aa).

The MTTase N-terminal domain maps to 15–135 (KKIFVKTYGC…LPEYVARLAN (121 aa)). Residues Cys-24, Cys-60, Cys-98, Cys-177, Cys-181, and Cys-184 each coordinate [4Fe-4S] cluster. One can recognise a Radical SAM core domain in the interval 163–395 (LARGATAFLT…QALLGEQQLA (233 aa)). Residues 398-461 (AGCAGRTMPV…RNSLRGRLRE (64 aa)) enclose the TRAM domain.

Belongs to the methylthiotransferase family. MiaB subfamily. In terms of assembly, monomer. [4Fe-4S] cluster serves as cofactor.

Its subcellular location is the cytoplasm. The enzyme catalyses N(6)-dimethylallyladenosine(37) in tRNA + (sulfur carrier)-SH + AH2 + 2 S-adenosyl-L-methionine = 2-methylsulfanyl-N(6)-dimethylallyladenosine(37) in tRNA + (sulfur carrier)-H + 5'-deoxyadenosine + L-methionine + A + S-adenosyl-L-homocysteine + 2 H(+). Catalyzes the methylthiolation of N6-(dimethylallyl)adenosine (i(6)A), leading to the formation of 2-methylthio-N6-(dimethylallyl)adenosine (ms(2)i(6)A) at position 37 in tRNAs that read codons beginning with uridine. In Parvibaculum lavamentivorans (strain DS-1 / DSM 13023 / NCIMB 13966), this protein is tRNA-2-methylthio-N(6)-dimethylallyladenosine synthase.